Consider the following 359-residue polypeptide: Guanine nucleotide-binding protein G(q) subunit alpha (359 aa).

S-palmitoyl cysteine attachment occurs at residues cysteine 9 and cysteine 10. The G-alpha domain maps to 38–359 (RELKLLLLGT…QLNLKEYNLV (322 aa)). The G1 motif stretch occupies residues 41–54 (KLLLLGTGESGKST). Residues serine 50, glycine 51, lysine 52, serine 53, threonine 54, serine 156, leucine 180, arginine 181, and arginine 183 each contribute to the GTP site. Serine 53 provides a ligand contact to Mg(2+). Residues 178-186 (DVLRVRVPT) form a G2 motif region. Threonine 186 provides a ligand contact to Mg(2+). The G3 motif stretch occupies residues 201 to 210 (FRMVDVGGQR). At glutamine 209 the chain carries 5-glutamyl histamine. The segment at 270 to 277 (ILFLNKKD) is G4 motif. Asparagine 274, lysine 275, aspartate 277, and alanine 331 together coordinate GTP. Residues 329–334 (TCATDT) are G5 motif.

Belongs to the G-alpha family. G(q) subfamily. In terms of assembly, g proteins are composed of 3 units; alpha, beta and gamma. The alpha chain contains the guanine nucleotide binding site. Interacts (GDP-bound form) with RIC8A (via C-terminus); promoting GNAQ folding and association with the plasma membrane. Binds NHERF1. Forms a complex with PECAM1 and BDKRB2. Interacts with GAS2L2. Post-translationally, palmitoylated by ZDHHC3 and ZDHHC7. Palmitoylation occurs in the Golgi and participates in the localization of GNAQ to the plasma membrane. Histaminylated at Gln-209 residues by TGM2.

The protein localises to the cell membrane. Its subcellular location is the golgi apparatus. It localises to the nucleus. The protein resides in the nucleus membrane. It catalyses the reaction GTP + H2O = GDP + phosphate + H(+). Guanine nucleotide-binding proteins (G proteins) function as transducers downstream of G protein-coupled receptors (GPCRs) in numerous signaling cascades. The alpha chain contains the guanine nucleotide binding site and alternates between an active, GTP-bound state and an inactive, GDP-bound state. Signaling by an activated GPCR promotes GDP release and GTP binding. The alpha subunit has a low GTPase activity that converts bound GTP to GDP, thereby terminating the signal. Both GDP release and GTP hydrolysis are modulated by numerous regulatory proteins. Signaling is mediated via phospholipase C-beta-dependent inositol lipid hydrolysis for signal propagation: activates phospholipase C-beta: following GPCR activation, GNAQ activates PLC-beta (PLCB1, PLCB2, PLCB3 or PLCB4), leading to production of diacylglycerol (DAG) and inositol 1,4,5-trisphosphate (IP3). Required for platelet activation. Regulates B-cell selection and survival and is required to prevent B-cell-dependent autoimmunity. Regulates chemotaxis of BM-derived neutrophils and dendritic cells (in vitro). Transduces FFAR4 signaling in response to long-chain fatty acids (LCFAs). Together with GNA11, required for heart development. The protein is Guanine nucleotide-binding protein G(q) subunit alpha (Gnaq) of Rattus norvegicus (Rat).